The following is a 512-amino-acid chain: Cytochrome P450 71BT1 (512 aa).

The signal sequence occupies residues 1 to 24; sequence MENLFIFLFALLLFCFMLLKLSKK. N-linked (GlcNAc...) asparagine glycosylation is found at Asn111 and Asn168. Cys447 serves as a coordination point for heme.

Belongs to the cytochrome P450 family.

The protein is Cytochrome P450 71BT1 of Catharanthus roseus (Madagascar periwinkle).